Here is a 267-residue protein sequence, read N- to C-terminus: Cerberus (267 aa).

The signal sequence occupies residues 1 to 17 (MHLLLFQLLVLLPLGKT). Disordered stretches follow at residues 19 to 52 (RHQDGRQNQSSLSPVLLPRNQRELPTGNHEEAEE) and 87 to 113 (WKKPEREMHPSRDSDSEPFPPGTQSLI). A glycan (N-linked (GlcNAc...) asparagine) is linked at Asn-26. A compositionally biased stretch (basic and acidic residues) spans 88–101 (KKPEREMHPSRDSD). 4 disulfide bridges follow: Cys-162–Cys-209, Cys-176–Cys-223, Cys-186–Cys-239, and Cys-190–Cys-241. The CTCK domain occupies 162–246 (CRTVPFSQTI…EECQCKVKTE (85 aa)). A glycan (N-linked (GlcNAc...) asparagine) is linked at Asn-222.

Belongs to the DAN family. In terms of assembly, forms monomers and predominantly dimers. Post-translationally, N-glycosylated.

Its subcellular location is the secreted. Cytokine that may play a role in anterior neural induction and somite formation during embryogenesis in part through a BMP-inhibitory mechanism. Can regulate Nodal signaling during gastrulation as well as the formation and patterning of the primitive streak. This Homo sapiens (Human) protein is Cerberus (CER1).